Here is an 877-residue protein sequence, read N- to C-terminus: Phosphoenolpyruvate carboxylase (877 aa).

Residues histidine 137 and lysine 542 contribute to the active site.

This sequence belongs to the PEPCase type 1 family. The cofactor is Mg(2+).

The catalysed reaction is oxaloacetate + phosphate = phosphoenolpyruvate + hydrogencarbonate. In terms of biological role, forms oxaloacetate, a four-carbon dicarboxylic acid source for the tricarboxylic acid cycle. The sequence is that of Phosphoenolpyruvate carboxylase from Tolumonas auensis (strain DSM 9187 / NBRC 110442 / TA 4).